A 520-amino-acid chain; its full sequence is Protein root UVB sensitive 4 (520 aa).

2 consecutive transmembrane segments (helical) span residues 275–295 and 301–321; these read IQTV…NMLF and LQAC…LLGI.

Belongs to the RUS1 family.

The protein localises to the membrane. This Arabidopsis thaliana (Mouse-ear cress) protein is Protein root UVB sensitive 4.